Here is a 183-residue protein sequence, read N- to C-terminus: Seminal plasma protein BSP-30 kDa (183 aa).

An N-terminal signal peptide occupies residues 1–25 (MAPLVGLFLIWAGASVFQQLHPVNG). The disordered stretch occupies residues 23–47 (VNGGDIPDPGSKPTPPGMADELPTE). Residues T36, T46, T57, T58, T59, and T64 are each glycosylated (O-linked (GalNAc...) threonine). Fibronectin type-II domains lie at 92 to 136 (FEGP…FCTE) and 137 to 183 (RDEP…WKYC). 4 disulfides stabilise this stretch: C97/C121, C111/C134, C142/C168, and C156/C183.

It belongs to the seminal plasma protein family.

Its subcellular location is the secreted. In terms of biological role, binds to spermatozoa upon ejaculation and may play a role in sperm capacitation. Displays heparin-, gelatin- and phospholipid-binding activities. This chain is Seminal plasma protein BSP-30 kDa, found in Bos taurus (Bovine).